Consider the following 525-residue polypeptide: Tubulin-specific chaperone E (525 aa).

Positions 33-77 constitute a CAP-Gly domain; the sequence is GKVDGFEGNWYGIEWDDPKRGKHQGTVKGKQYFKCINKGSGSFMK. LRR repeat units follow at residues 300 to 321, 326 to 347, and 362 to 383; these read TLKS…LSSL, QLTE…GDVD, and NLKR…DKLD. The segment at 414–444 is disordered; sequence ENEIENDIENNNNNIKKDNNNNNKNNKNNKN. Positions 422–444 are enriched in low complexity; that stretch reads ENNNNNIKKDNNNNNKNNKNNKN. Residues 441-481 enclose the LRRCT domain; it reads NNKNNKTIFLNRLNIIPRLSNLKKLNLSDITLLERKDAELY.

It belongs to the TBCE family. As to quaternary structure, supercomplex made of cofactors A to E. Cofactors A and D function by capturing and stabilizing tubulin in a quasi-native conformation. Cofactor E binds to the cofactor D-tubulin complex; interaction with cofactor C then causes the release of tubulin polypeptides that are committed to the native state.

The protein resides in the cytoplasm. It localises to the cytoskeleton. Its function is as follows. Tubulin-folding protein; involved in the second step of the tubulin folding pathway. This chain is Tubulin-specific chaperone E (tbce), found in Dictyostelium discoideum (Social amoeba).